Reading from the N-terminus, the 421-residue chain is Osmoprotective compounds-binding protein GgtB (421 aa).

A signal peptide spans 1-18; that stretch reads MKFFKITTLIISLIVLTS. A lipid anchor (N-palmitoyl cysteine) is attached at Cys19. A lipid anchor (S-diacylglycerol cysteine) is attached at Cys19.

This sequence belongs to the bacterial solute-binding protein 1 family. The complex is composed of two ATP-binding proteins (GgtA), two transmembrane proteins (GgtC and GgtD) and a solute-binding protein (GgtB).

Its subcellular location is the cell membrane. Functionally, part of the ABC transporter complex GgtABCD involved in the uptake of the osmoprotective compounds glucosylglycerol (GG), sucrose and trehalose. Binds glucosylglycerol and exhibits a somewhat lower affinity towards sucrose and a substantially lower affinity towards trehalose. The sequence is that of Osmoprotective compounds-binding protein GgtB from Synechocystis sp. (strain ATCC 27184 / PCC 6803 / Kazusa).